The following is a 208-amino-acid chain: Redox-sensing transcriptional repressor Rex (208 aa).

A DNA-binding region (H-T-H motif) is located at residues 16-55; that stretch reads VYSRYLENLYRKGITTVSSADIAQGVGVTSAQVRKDLAYF. 90–95 contributes to the NAD(+) binding site; it reads GAGNLG.

This sequence belongs to the transcriptional regulatory Rex family. Homodimer.

Its subcellular location is the cytoplasm. In terms of biological role, modulates transcription in response to changes in cellular NADH/NAD(+) redox state. The chain is Redox-sensing transcriptional repressor Rex from Carboxydothermus hydrogenoformans (strain ATCC BAA-161 / DSM 6008 / Z-2901).